Reading from the N-terminus, the 422-residue chain is Adenylosuccinate synthetase (422 aa).

GTP-binding positions include 11 to 17 (GDEGKGK) and 39 to 41 (GHT). Residue Asp-12 is the Proton acceptor of the active site. 2 residues coordinate Mg(2+): Asp-12 and Gly-39. IMP is bound by residues 12–15 (DEGK), 37–40 (NAGH), Thr-129, Arg-143, Asn-219, Thr-234, and Arg-298. The Proton donor role is filled by His-40. Residue 294 to 300 (VTTGRKR) coordinates substrate. GTP contacts are provided by residues Arg-300, 326 to 328 (KLD), and 411 to 413 (GTG).

It belongs to the adenylosuccinate synthetase family. As to quaternary structure, homodimer. Requires Mg(2+) as cofactor.

It localises to the cytoplasm. It catalyses the reaction IMP + L-aspartate + GTP = N(6)-(1,2-dicarboxyethyl)-AMP + GDP + phosphate + 2 H(+). Its pathway is purine metabolism; AMP biosynthesis via de novo pathway; AMP from IMP: step 1/2. Its function is as follows. Plays an important role in the de novo pathway and in the salvage pathway of purine nucleotide biosynthesis. Catalyzes the first committed step in the biosynthesis of AMP from IMP. The chain is Adenylosuccinate synthetase from Talaromyces stipitatus (strain ATCC 10500 / CBS 375.48 / QM 6759 / NRRL 1006) (Penicillium stipitatum).